The following is a 453-amino-acid chain: Choline kinase alpha (453 aa).

The segment at 22–81 (CGGSAAPTPGVGQQRDAAGELESKQLGGRSQPLALPPPPPPPLPLPPPPSPPLADEQPEP) is disordered. The segment covering 55–73 (ALPPPPPPPLPLPPPPSPP) has biased composition (pro residues). Serine 71 bears the Phosphoserine mark. Residues 113–119 (RGGLSNM), arginine 142, and 203–209 (QFIPSRR) each bind ATP. 115–117 (GLS) is a phosphocholine binding site. At lysine 243 the chain carries N6-acetyllysine. Serine 275 carries the phosphoserine modification. Positions 304 and 326 each coordinate ATP.

This sequence belongs to the choline/ethanolamine kinase family. In terms of assembly, heterodimer with CHKB. Homodimer. As to quaternary structure, monomer; acetylation by KAT5 promotes dissociation of the homodimer and monomerization. Post-translationally, phosphorylated at Ser-275 by AMPK in response to glucose deprivation, leading to localization to lipid droplets. Acetylated by KAT5 at Lys-243 following phosphorylation by AMPK, leading to monomerization and conversion into a tyrosine-protein kinase. As to expression, testis, brain, lung, kidney and liver.

It is found in the cytoplasm. The protein resides in the cytosol. It localises to the lipid droplet. It catalyses the reaction choline + ATP = phosphocholine + ADP + H(+). The catalysed reaction is ethanolamine + ATP = phosphoethanolamine + ADP + H(+). The enzyme catalyses L-tyrosyl-[protein] + ATP = O-phospho-L-tyrosyl-[protein] + ADP + H(+). Its pathway is phospholipid metabolism; phosphatidylcholine biosynthesis; phosphocholine from choline: step 1/1. The protein operates within phospholipid metabolism; phosphatidylethanolamine biosynthesis; phosphatidylethanolamine from ethanolamine: step 1/3. Its function is as follows. Plays a key role in phospholipid biosynthesis by catalyzing the phosphorylation of free choline to phosphocholine, the first step in phosphatidylcholine biosynthesis. Also phosphorylates ethanolamine, thereby contributing to phosphatidylethanolamine biosynthesis. Has higher activity with choline. This isoform plays a key role in lipolysis of lipid droplets following glucose deprivation. In response to glucose deprivation, phosphorylated by AMPK, promoting localization to lipid droplets. Phosphorylation is followed by acetylation by KAT5, leading to dissociation of the homodimer into a monomer. Monomeric CHKA isoform 1 is converted into a tyrosine-protein kinase, which phosphorylates lipid droplet structural proteins PLIN2 and PLIN3, leading to lipolysis of lipid droplets. This chain is Choline kinase alpha (Chka), found in Rattus norvegicus (Rat).